Reading from the N-terminus, the 201-residue chain is 3-isopropylmalate dehydratase small subunit (201 aa).

It belongs to the LeuD family. LeuD type 1 subfamily. In terms of assembly, heterodimer of LeuC and LeuD.

It catalyses the reaction (2R,3S)-3-isopropylmalate = (2S)-2-isopropylmalate. It functions in the pathway amino-acid biosynthesis; L-leucine biosynthesis; L-leucine from 3-methyl-2-oxobutanoate: step 2/4. Catalyzes the isomerization between 2-isopropylmalate and 3-isopropylmalate, via the formation of 2-isopropylmaleate. The sequence is that of 3-isopropylmalate dehydratase small subunit from Escherichia coli O157:H7.